We begin with the raw amino-acid sequence, 428 residues long: Serine--tRNA ligase (428 aa).

Residue 235–237 (TAE) participates in L-serine binding. An ATP-binding site is contributed by 266 to 268 (RSE). Residue glutamate 289 coordinates L-serine. 353-356 (EISS) provides a ligand contact to ATP. L-serine is bound at residue serine 389.

This sequence belongs to the class-II aminoacyl-tRNA synthetase family. Type-1 seryl-tRNA synthetase subfamily. As to quaternary structure, homodimer. The tRNA molecule binds across the dimer.

The protein localises to the cytoplasm. It carries out the reaction tRNA(Ser) + L-serine + ATP = L-seryl-tRNA(Ser) + AMP + diphosphate + H(+). The enzyme catalyses tRNA(Sec) + L-serine + ATP = L-seryl-tRNA(Sec) + AMP + diphosphate + H(+). It functions in the pathway aminoacyl-tRNA biosynthesis; selenocysteinyl-tRNA(Sec) biosynthesis; L-seryl-tRNA(Sec) from L-serine and tRNA(Sec): step 1/1. In terms of biological role, catalyzes the attachment of serine to tRNA(Ser). Is also able to aminoacylate tRNA(Sec) with serine, to form the misacylated tRNA L-seryl-tRNA(Sec), which will be further converted into selenocysteinyl-tRNA(Sec). This is Serine--tRNA ligase from Shewanella sp. (strain W3-18-1).